A 949-amino-acid polypeptide reads, in one-letter code: Glycine dehydrogenase (decarboxylating) (949 aa).

Lys697 is modified (N6-(pyridoxal phosphate)lysine).

It belongs to the GcvP family. In terms of assembly, the glycine cleavage system is composed of four proteins: P, T, L and H. It depends on pyridoxal 5'-phosphate as a cofactor.

The catalysed reaction is N(6)-[(R)-lipoyl]-L-lysyl-[glycine-cleavage complex H protein] + glycine + H(+) = N(6)-[(R)-S(8)-aminomethyldihydrolipoyl]-L-lysyl-[glycine-cleavage complex H protein] + CO2. Its function is as follows. The glycine cleavage system catalyzes the degradation of glycine. The P protein binds the alpha-amino group of glycine through its pyridoxal phosphate cofactor; CO(2) is released and the remaining methylamine moiety is then transferred to the lipoamide cofactor of the H protein. The chain is Glycine dehydrogenase (decarboxylating) from Deinococcus radiodurans (strain ATCC 13939 / DSM 20539 / JCM 16871 / CCUG 27074 / LMG 4051 / NBRC 15346 / NCIMB 9279 / VKM B-1422 / R1).